A 190-amino-acid polypeptide reads, in one-letter code: Cell division protein SepF (190 aa).

Belongs to the SepF family. In terms of assembly, homodimer. Interacts with FtsZ.

It is found in the cytoplasm. Its function is as follows. Cell division protein that is part of the divisome complex and is recruited early to the Z-ring. Probably stimulates Z-ring formation, perhaps through the cross-linking of FtsZ protofilaments. Its function overlaps with FtsA. This chain is Cell division protein SepF, found in Synechococcus sp. (strain WH7803).